A 238-amino-acid chain; its full sequence is Large ribosomal subunit protein uL2 (238 aa).

The tract at residues 197–219 is disordered; sequence ASDHPFGGKRHSNHSKPFTVSKW.

This sequence belongs to the universal ribosomal protein uL2 family. As to quaternary structure, part of the 50S ribosomal subunit. Forms a bridge to the 30S subunit in the 70S ribosome.

Functionally, one of the primary rRNA binding proteins. Required for association of the 30S and 50S subunits to form the 70S ribosome, for tRNA binding and peptide bond formation. It has been suggested to have peptidyltransferase activity; this is somewhat controversial. Makes several contacts with the 16S rRNA in the 70S ribosome. This chain is Large ribosomal subunit protein uL2, found in Nanoarchaeum equitans (strain Kin4-M).